A 422-amino-acid polypeptide reads, in one-letter code: Serine protease HTRA2, mitochondrial (422 aa).

The transit peptide at 1–17 (MALRGSHRLEVIFKRCI) directs the protein to the mitochondrion. Residues 18–74 (ASPVFHSHAANRRSSQLAIKGTDPSSNGNSGQDQQNGEQKAKGWRRLVRFFVPFSLG) constitute a propeptide that is removed on maturation. The segment covering 29 to 55 (RRSSQLAIKGTDPSSNGNSGQDQQNGE) has biased composition (polar residues). The tract at residues 29–56 (RRSSQLAIKGTDPSSNGNSGQDQQNGEQ) is disordered. A helical membrane pass occupies residues 64–82 (LVRFFVPFSLGAAVSAAVI). 2 consecutive short sequence motifs (IAP-binding) follow at residues 75 to 78 (AAVS) and 94 to 97 (SKMT). The segment at 139-302 (SNGSGFIIEQ…IPIDYVKVFL (164 aa)) is serine protease. Active-site charge relay system residues include His-157, Asp-189, and Ser-266. Residues 325-410 (MGITMLTLTP…NLDIVILRGV (86 aa)) enclose the PDZ domain.

The protein belongs to the peptidase S1C family. As to quaternary structure, interacts with th/DIAP1 (via BIR 2 domain).

It localises to the mitochondrion intermembrane space. Its subcellular location is the mitochondrion membrane. It catalyses the reaction Cleavage of non-polar aliphatic amino-acids at the P1 position, with a preference for Val, Ile and Met. At the P2 and P3 positions, Arg is selected most strongly with a secondary preference for other hydrophilic residues.. Serine protease that shows proteolytic activity against a non-specific substrate beta-casein. Promotes or induces cell death either by direct binding to and inhibition of BIRC proteins (also called inhibitor of apoptosis proteins, IAPs), leading to an increase in caspase activity, or by a BIRC inhibition-independent, caspase-independent and serine protease activity-dependent mechanism. Can antagonize antiapoptotic activity of th/Diap1 by directly inducing the degradation of th/Diap1. The chain is Serine protease HTRA2, mitochondrial from Drosophila yakuba (Fruit fly).